Consider the following 943-residue polypeptide: Isoleucine--tRNA ligase (943 aa).

The 'HIGH' region motif lies at 58–68 (PYANGKIHIGH). Glutamate 567 is an L-isoleucyl-5'-AMP binding site. A 'KMSKS' region motif is present at residues 608–612 (KMSKS). An ATP-binding site is contributed by lysine 611. The Zn(2+) site is built by cysteine 906, cysteine 909, cysteine 926, and cysteine 929.

The protein belongs to the class-I aminoacyl-tRNA synthetase family. IleS type 1 subfamily. In terms of assembly, monomer. Zn(2+) is required as a cofactor.

It is found in the cytoplasm. The catalysed reaction is tRNA(Ile) + L-isoleucine + ATP = L-isoleucyl-tRNA(Ile) + AMP + diphosphate. Catalyzes the attachment of isoleucine to tRNA(Ile). As IleRS can inadvertently accommodate and process structurally similar amino acids such as valine, to avoid such errors it has two additional distinct tRNA(Ile)-dependent editing activities. One activity is designated as 'pretransfer' editing and involves the hydrolysis of activated Val-AMP. The other activity is designated 'posttransfer' editing and involves deacylation of mischarged Val-tRNA(Ile). The chain is Isoleucine--tRNA ligase from Pseudomonas putida (strain W619).